A 224-amino-acid chain; its full sequence is tRNA (guanine-N(7)-)-methyltransferase (224 aa).

Glutamate 54, glutamate 79, glutamate 106, and aspartate 129 together coordinate S-adenosyl-L-methionine. The active site involves aspartate 129. Residues lysine 133 and aspartate 165 each contribute to the substrate site.

Belongs to the class I-like SAM-binding methyltransferase superfamily. TrmB family.

The enzyme catalyses guanosine(46) in tRNA + S-adenosyl-L-methionine = N(7)-methylguanosine(46) in tRNA + S-adenosyl-L-homocysteine. It functions in the pathway tRNA modification; N(7)-methylguanine-tRNA biosynthesis. Functionally, catalyzes the formation of N(7)-methylguanine at position 46 (m7G46) in tRNA. This chain is tRNA (guanine-N(7)-)-methyltransferase, found in Chlamydia caviae (strain ATCC VR-813 / DSM 19441 / 03DC25 / GPIC) (Chlamydophila caviae).